The primary structure comprises 490 residues: Myocilin (490 aa).

Residues Met-1 to Ala-18 form the signal peptide. The stretch at Ser-55–Gln-170 forms a coiled coil. The interval Arg-168–Glu-187 is disordered. Residues Gly-230–Lys-489 form the Olfactomedin-like domain. Residues Cys-231 and Cys-419 are joined by a disulfide bond. Ca(2+) contacts are provided by Asp-366, Asn-414, Ala-415, Ile-463, and Asp-464. The Microbody targeting signal signature appears at Ser-488–Ile-490.

As to quaternary structure, homodimer (via N-terminus). Can also form higher oligomers. Interacts with OLFM3, FN1, NRCAM, GLDN and NFASC. Interacts (via N-terminus) with MYL2. Interacts with SFRP1, FRZB, FZD7, FZD10, FZD1 and WIF1; regulates Wnt signaling. Interacts with SNTA1; regulates muscle hypertrophy. Interacts with ERBB2 and ERBB3; activates ERBB2-ERBB3 signaling pathway. Interacts with SNCG; affects its secretion and its aggregation. Post-translationally, palmitoylated. In terms of processing, glycosylated. Undergoes a calcium-dependent proteolytic cleavage at Arg-212 by CAPN2 in the endoplasmic reticulum. The result is the production of two fragments, one of 35 kDa containing the C-terminal olfactomedin-like domain, and another of 20 kDa containing the N-terminal leucine zipper-like domain. As to expression, detected in eye aqueous humor (at protein level).

Its subcellular location is the secreted. It is found in the golgi apparatus. It localises to the cytoplasmic vesicle. The protein localises to the extracellular space. The protein resides in the extracellular matrix. Its subcellular location is the extracellular exosome. It is found in the mitochondrion. It localises to the mitochondrion intermembrane space. The protein localises to the mitochondrion inner membrane. The protein resides in the mitochondrion outer membrane. Its subcellular location is the rough endoplasmic reticulum. It is found in the cell projection. It localises to the cilium. The protein localises to the endoplasmic reticulum. Functionally, secreted glycoprotein regulating the activation of different signaling pathways in adjacent cells to control different processes including cell adhesion, cell-matrix adhesion, cytoskeleton organization and cell migration. Promotes substrate adhesion, spreading and formation of focal contacts. Negatively regulates cell-matrix adhesion and stress fiber assembly through Rho protein signal transduction. Modulates the organization of actin cytoskeleton by stimulating the formation of stress fibers through interactions with components of Wnt signaling pathways. Promotes cell migration through activation of PTK2 and the downstream phosphatidylinositol 3-kinase signaling. Plays a role in bone formation and promotes osteoblast differentiation in a dose-dependent manner through mitogen-activated protein kinase signaling. Mediates myelination in the peripheral nervous system through ERBB2/ERBB3 signaling. Plays a role as a regulator of muscle hypertrophy through the components of dystrophin-associated protein complex. Involved in positive regulation of mitochondrial depolarization. Plays a role in neurite outgrowth. May participate in the obstruction of fluid outflow in the trabecular meshwork. The sequence is that of Myocilin from Oryctolagus cuniculus (Rabbit).